The chain runs to 713 residues: Probable 1-deoxy-D-xylulose-5-phosphate synthase 2, chloroplastic (713 aa).

The transit peptide at 1-30 (MALQASSSPSMFRAIPTNTNASCRRKLQVR) directs the protein to the chloroplast. Thiamine diphosphate is bound by residues His-140 and 181–183 (GHS). Asp-212 provides a ligand contact to Mg(2+). Thiamine diphosphate-binding positions include 213–214 (GA), Asn-241, Tyr-362, and Glu-444. Asn-241 is a Mg(2+) binding site.

Belongs to the transketolase family. DXPS subfamily. In terms of assembly, homodimer. Mg(2+) serves as cofactor. The cofactor is thiamine diphosphate.

It localises to the plastid. Its subcellular location is the chloroplast. The catalysed reaction is D-glyceraldehyde 3-phosphate + pyruvate + H(+) = 1-deoxy-D-xylulose 5-phosphate + CO2. It functions in the pathway metabolic intermediate biosynthesis; 1-deoxy-D-xylulose 5-phosphate biosynthesis; 1-deoxy-D-xylulose 5-phosphate from D-glyceraldehyde 3-phosphate and pyruvate: step 1/1. In terms of biological role, catalyzes the acyloin condensation reaction between C atoms 2 and 3 of pyruvate and glyceraldehyde 3-phosphate to yield 1-deoxy-D-xylulose-5-phosphate (DXP). Is a limiting enzyme for plastidic isoprenoid biosynthesis and essential for chloroplast development. The protein is Probable 1-deoxy-D-xylulose-5-phosphate synthase 2, chloroplastic of Oryza sativa subsp. japonica (Rice).